We begin with the raw amino-acid sequence, 178 residues long: Major non-capsid protein (178 aa).

This sequence belongs to the tenuiviruses NCP family.

Its subcellular location is the host cytoplasm. Induces the formation of large intracellular inclusion body, organized in amorphous and crystalline arrays. Presumably the main cause of the stripe disease observed in host. The chain is Major non-capsid protein from Rice stripe virus (isolate T) (RSV).